The following is a 314-amino-acid chain: ATP synthase gamma chain (314 aa).

It belongs to the ATPase gamma chain family. F-type ATPases have 2 components, CF(1) - the catalytic core - and CF(0) - the membrane proton channel. CF(1) has five subunits: alpha(3), beta(3), gamma(1), delta(1), epsilon(1). CF(0) has three main subunits: a, b and c.

The protein resides in the cell membrane. Functionally, produces ATP from ADP in the presence of a proton gradient across the membrane. The gamma chain is believed to be important in regulating ATPase activity and the flow of protons through the CF(0) complex. The chain is ATP synthase gamma chain from Lactiplantibacillus plantarum (strain ATCC BAA-793 / NCIMB 8826 / WCFS1) (Lactobacillus plantarum).